The following is a 467-amino-acid chain: H(+)/Cl(-) exchange transporter ClcA (467 aa).

Residues 1–30 (MTKRERIVKSVLAHVPKDAINQFVSRGSTP) are Cytoplasmic-facing. The chain crosses the membrane as a helical span at residues 31-67 (FSVLIMAAIVGTLAGFVGTYFELAVHFVSETRTEWLR). Topologically, residues 68 to 74 (SEIGSVL) are periplasmic. A helical transmembrane segment spans residues 75–98 (PLWLAAVLISALLAFIGYFLVHRF). The short motif at 104–108 (GSGIP) is the Selectivity filter part_1 element. Position 105 (S105) interacts with chloride. Residues 107–114 (IPEIEGAM) constitute an intramembrane region (helical). Residues 115–121 (DNIRPVR) are Cytoplasmic-facing. 2 helical membrane passes run 122 to 139 (WWRV…ALGS) and 146 to 164 (EGPT…TDIF). The Selectivity filter part_2 signature appears at 144-148 (GREGP). Residues 165 to 174 (RVKDDDTRHS) are Cytoplasmic-facing. 2 intramembrane regions (helical) span residues 175–187 (LLAS…LAAA) and 191–199 (PLAGIMFVV). The Cytoplasmic segment spans residues 200 to 212 (EEMRPQFRYSLIS). A helical membrane pass occupies residues 213 to 230 (IRAVIISAIMANIVFRAI). Residues 231–250 (NGQDAVITMPQYQSPALQTL) lie on the Periplasmic side of the membrane. A helical membrane pass occupies residues 251 to 279 (WLFLLLGALFGVFGVIFNKLITVAQDSFV). The Cytoplasmic segment spans residues 280-285 (AIHKND). A helical transmembrane segment spans residues 286 to 307 (RKRYLITGSILGGVFGLLLLYV). Residues 308 to 327 (PQLTGGGIALIPDVTTGNYS) lie on the Periplasmic side of the membrane. 2 consecutive transmembrane segments (helical) span residues 328-347 (ISIL…LCFG) and 353-374 (GIFA…ASAD). A Selectivity filter part_3 motif is present at residues 353–357 (GIFAP). Residues I354 and F355 each contribute to the chloride site. Residues 375 to 384 (VLLPTLDIEP) lie on the Periplasmic side of the membrane. Residues 385–399 (GVFAIAGMGALFAAT) constitute an intramembrane region (helical). Positions 400–402 (VRA) form an intramembrane region, note=Loop between two helices. The helical intramembrane region spans 403–414 (PITGILLVIEMT). Residues 415–419 (NNYYL) constitute an intramembrane region (note=Loop between two helices). Residues 420 to 436 (ILPLIITCLGAVIVAQL) form a helical membrane-spanning segment. At 437 to 467 (LGGQPIYSQLLHRTLKNDKLRQQDLPENQAS) the chain is on the cytoplasmic side. Y443 lines the chloride pocket.

The protein belongs to the chloride channel (TC 2.A.49) family. ClcA subfamily. In terms of assembly, homodimer.

The protein resides in the cell inner membrane. The enzyme catalyses 2 chloride(in) + H(+)(out) = 2 chloride(out) + H(+)(in). Functionally, proton-coupled chloride transporter. Functions as antiport system and exchanges two chloride ions for 1 proton. Probably acts as an electrical shunt for an outwardly-directed proton pump that is linked to amino acid decarboxylation, as part of the extreme acid resistance (XAR) response. The polypeptide is H(+)/Cl(-) exchange transporter ClcA (Vibrio parahaemolyticus serotype O3:K6 (strain RIMD 2210633)).